Consider the following 81-residue polypeptide: RNA-binding protein Hfq (81 aa).

The 60-residue stretch at 10–69 (DPFLNTLRREHVPVSIYLVNGIKLQGQIESFDQYVVLLRNTVTQMVYKHAISTIVPGRAV) folds into the Sm domain.

It belongs to the Hfq family. In terms of assembly, homohexamer.

Its function is as follows. RNA chaperone that binds small regulatory RNA (sRNAs) and mRNAs to facilitate mRNA translational regulation in response to envelope stress, environmental stress and changes in metabolite concentrations. Also binds with high specificity to tRNAs. The protein is RNA-binding protein Hfq of Variovorax paradoxus (strain S110).